The sequence spans 326 residues: Aquaporin-3 (326 aa).

The next 2 helical transmembrane spans lie at 24-44 (LAEFLGTFLLVLLLNGMIITA) and 64-84 (LAFGGGLAVMVAVLVSGGISG). The NPA 1 motif lies at 88 to 90 (NPA). The chain crosses the membrane as a helical span at residues 107 to 127 (LVYIFMQYMGAFFAASILYAV). Residue Asn-146 is glycosylated (N-linked (GlcNAc...) asparagine). 2 consecutive transmembrane segments (helical) span residues 166–186 (IFDAILGTGLLVMGIFAIIDP) and 196–216 (IPLYVGFLISSLIFSFSYNAG). Residues 220–222 (NPA) carry the NPA 2 motif. The helical transmembrane segment at 247–267 (LWWLVPVIGPHVGGLLGGVTY) threads the bilayer. N-linked (GlcNAc...) asparagine glycosylation is present at Asn-294.

This sequence belongs to the MIP/aquaporin (TC 1.A.8) family.

It localises to the cell membrane. Aquaglyceroporin that may modulate the water content and osmolytes during anhydrobiosis. This Milnesium tardigradum (Water bear) protein is Aquaporin-3.